An 815-amino-acid chain; its full sequence is MFMSSSSSSHARRPQLSSFSYLHPPLPFPGLSFFNTRDKRVNFDSTRIICIAKSKPARTTPEYSDVLQTGLPLIVEDDIQEQEEPLEVSLENQIRQGVDIVKSMLGSMEDGETSISAYDTAWVALVENIHHPGSPQFPSSLQWIANNQLPDGSWGDPDVFLAHDRLINTLACVIALKKWNIHPHKCKRGLSFVKENISKLEKENEEHMLIGFEIAFPSLLEMAKKLGIEIPDDSPALQDIYTKRDLKLTRIPKDIMHNVPTTLLYSLEGLPSLDWEKLVKLQCTDGSFLFSPSSTAFALMHTKDGNCFSYINNLVHKFNGGVPTVYPVDLFEHIWCVDRLQRLGISRFFHPEIKECLGYVHRYWTKDGICWARNSRVQDIDDTAMGFRLLRLHGYEVSPDVFKQFRKGDEFVCFMGQSNQAITGIYNLYRASQMMFPEETILEEAKKFSVNFLREKRAASELLDKWIITKDLPGEVGFALDVPWYACLPRVETRLYIEQYGGQDDVWIGKTLYRMPYVNNNVYLELAKLDYNNCQSLHRIEWDNIQKWYEGYNLGGFGVNKRSLLRTYFLATSNIFEPERSVERLTWAKTVILVQAIASYFENSREERIEFANEFQKFLNTRGYINGRRLDVKQATKGLIEMVFATLNQFSLDALVVHGEDITHHLYQSWEKWVLTWQEGGDRREGEAELLVQTINLMAGHTHSQEEELYERLFKLTNTVCHQLGHYHHLNKDKQPQQVEDNGGYNNSNPESISKLQIESDMRELVQLVLNSSDGMDSNIKQTFLTVTKSFYYTAFTHPGTVNYHIAKVLFERVV.

A chloroplast-targeting transit peptide spans 1 to 51; it reads MFMSSSSSSHARRPQLSSFSYLHPPLPFPGLSFFNTRDKRVNFDSTRIICI. Lys247 is a substrate binding site. Residues Asp379 and Asp381 each coordinate Mg(2+). Positions 379–382 match the DXDD motif motif; it reads DIDD. Residue Lys465 participates in substrate binding.

It belongs to the terpene synthase family. Tpsc subfamily. The cofactor is Mg(2+).

It is found in the plastid. The protein localises to the chloroplast. It carries out the reaction (2E,6E,10E)-geranylgeranyl diphosphate = (-)-kolavenyl diphosphate. With respect to regulation, inhibited by high concentrations of magnesium. Its function is as follows. Diterpene synthase that catalyzes the formation of (-)-kolavenyl diphosphate from geranylgeranyl diphosphate (GGPP). The sequence is that of (-)-kolavenyl diphosphate synthase TPS28, chloroplastic from Tripterygium wilfordii (Thunder God vine).